The primary structure comprises 89 residues: Cell division protein FtsB (89 aa).

Topologically, residues 1–3 (MRP) are cytoplasmic. The chain crosses the membrane as a helical span at residues 4-21 (IIAILIALFILLQYQLWF). Topologically, residues 22 to 89 (AAGGIVSVHH…KNEVFYQIVK (68 aa)) are periplasmic. The stretch at 29–62 (VHHLNENINHQIMENQKLKDRNTALLADIDDLKH) forms a coiled coil.

This sequence belongs to the FtsB family. In terms of assembly, part of a complex composed of FtsB, FtsL and FtsQ.

It localises to the cell inner membrane. In terms of biological role, essential cell division protein. May link together the upstream cell division proteins, which are predominantly cytoplasmic, with the downstream cell division proteins, which are predominantly periplasmic. This is Cell division protein FtsB from Coxiella burnetii (strain RSA 493 / Nine Mile phase I).